A 442-amino-acid chain; its full sequence is Putative ammonium transporter sll1017 (442 aa).

13 helical membrane passes run 5-25 (NFPLARYVLGAMLAFLFVGVA), 44-64 (LFLLAAAVLVLFMQAGFAMLE), 81-101 (TFDVCVGVLLYFLFGYSLMYG), 104-124 (PVLGGFFGWGGFGITNNLDNV), 133-153 (WLFQAAFAATAATIVSGAVMG), 155-175 (MYFKAYLIYSAVITGLVYPIS), 193-213 (FAGSLLVHSVGGFAALAAVVV), 240-260 (GVFILWVGWYGFNPGSQLAFV), 269-289 (MLIAVNTTLSAAAGGLAALAF), 299-319 (PNLLVTLNGILGGLVGITAGC), 325-345 (WSAIAIGVVAGILSVLGTKLL), 354-374 (VGAWPVHGLCGIWGGIAVGIF), and 386-406 (IVGSLVIPFWAFITMFFLFYV).

This sequence belongs to the ammonia transporter channel (TC 1.A.11.2) family.

The protein resides in the cell membrane. This is Putative ammonium transporter sll1017 from Synechocystis sp. (strain ATCC 27184 / PCC 6803 / Kazusa).